A 901-amino-acid chain; its full sequence is HTH-type transcriptional regulator MalT (901 aa).

39–46 contacts ATP; sequence SPAGYGKT. The region spanning 829-894 is the HTH luxR-type domain; it reads ELIRTSPLTQ…DAVQHAQQLL (66 aa). The segment at residues 853–872 is a DNA-binding region (H-T-H motif); that stretch reads NDQIAGELDVAATTIKTHIR.

Belongs to the MalT family. In terms of assembly, monomer in solution. Oligomerizes to an active state in the presence of the positive effectors ATP and maltotriose.

With respect to regulation, activated by ATP and maltotriose, which are both required for DNA binding. Its function is as follows. Positively regulates the transcription of the maltose regulon whose gene products are responsible for uptake and catabolism of malto-oligosaccharides. Specifically binds to the promoter region of its target genes, recognizing a short DNA motif called the MalT box. This chain is HTH-type transcriptional regulator MalT, found in Cronobacter sakazakii (strain ATCC BAA-894) (Enterobacter sakazakii).